The following is a 420-amino-acid chain: Calsequestrin-1 (420 aa).

The first 22 residues, 1–22 (MKGPWLVLAALCLSLANLGPRG), serve as a signal peptide directing secretion. N-linked (GlcNAc...) asparagine glycosylation occurs at Asn338. Positions 369-420 (LEGEVNTEDDDDDDDDDDDDDDDDDDDDDDDDDDDDDDDDDDDDDDDDDDDD) are disordered.

Belongs to the calsequestrin family. Monomer; increases in response to a depletion of intracellular calcium. Homodimer. Homotetramer and homopolymer. Can form linear homooligomers. Ca(2+) ions promote oligomerization. Detected in skeletal muscle (at protein level). Detected in skeletal muscle.

It is found in the endoplasmic reticulum. Its subcellular location is the sarcoplasmic reticulum. The protein resides in the sarcoplasmic reticulum lumen. The protein localises to the sarcoplasmic reticulum membrane. It localises to the mitochondrion matrix. Calsequestrin is a high-capacity, moderate affinity, calcium-binding protein and thus acts as an internal calcium store in muscle. Calcium ions are bound by clusters of acidic residues at the protein surface, often at the interface between subunits. Can bind around 80 Ca(2+) ions. Regulates the release of lumenal Ca(2+) via the calcium release channel RYR1; this plays an important role in triggering muscle contraction. Negatively regulates store-operated Ca(2+) entry (SOCE) activity. This Pelophylax lessonae (Pool frog) protein is Calsequestrin-1.